Consider the following 269-residue polypeptide: Small ribosomal subunit protein eS1 (269 aa).

Disordered regions lie at residues 1–20 and 249–269; these read MAVG…SKKK and AASG…QESV.

Belongs to the eukaryotic ribosomal protein eS1 family. Component of the small ribosomal subunit. Mature ribosomes consist of a small (40S) and a large (60S) subunit. The 40S subunit contains about 33 different proteins and 1 molecule of RNA (18S). The 60S subunit contains about 49 different proteins and 3 molecules of RNA (28S, 5.8S and 5S).

The protein resides in the cytoplasm. In Anopheles darlingi (Mosquito), this protein is Small ribosomal subunit protein eS1.